Consider the following 122-residue polypeptide: Small ribosomal subunit protein bS16 (122 aa).

The disordered stretch occupies residues 87-122; the sequence is AQSNPKKALPKKKAQERAAASAAAAEKAAAAAAPEA. A compositionally biased stretch (low complexity) spans 103–122; that stretch reads RAAASAAAAEKAAAAAAPEA.

This sequence belongs to the bacterial ribosomal protein bS16 family.

This is Small ribosomal subunit protein bS16 from Methylocella silvestris (strain DSM 15510 / CIP 108128 / LMG 27833 / NCIMB 13906 / BL2).